The chain runs to 88 residues: DNA-directed RNA polymerase subunit omega (88 aa).

The protein belongs to the RNA polymerase subunit omega family. In terms of assembly, the RNAP catalytic core consists of 2 alpha, 1 beta, 1 beta' and 1 omega subunit. When a sigma factor is associated with the core the holoenzyme is formed, which can initiate transcription.

It carries out the reaction RNA(n) + a ribonucleoside 5'-triphosphate = RNA(n+1) + diphosphate. Promotes RNA polymerase assembly. Latches the N- and C-terminal regions of the beta' subunit thereby facilitating its interaction with the beta and alpha subunits. The polypeptide is DNA-directed RNA polymerase subunit omega (Thermobifida fusca (strain YX)).